The following is a 79-amino-acid chain: Acyl carrier protein (79 aa).

Positions 2 to 77 (SDVAERVKKI…DAVNFLEKAT (76 aa)) constitute a Carrier domain. Residue S37 is modified to O-(pantetheine 4'-phosphoryl)serine.

It belongs to the acyl carrier protein (ACP) family. In terms of processing, 4'-phosphopantetheine is transferred from CoA to a specific serine of apo-ACP by AcpS. This modification is essential for activity because fatty acids are bound in thioester linkage to the sulfhydryl of the prosthetic group.

Its subcellular location is the cytoplasm. It functions in the pathway lipid metabolism; fatty acid biosynthesis. Its function is as follows. Carrier of the growing fatty acid chain in fatty acid biosynthesis. This chain is Acyl carrier protein, found in Methylocella silvestris (strain DSM 15510 / CIP 108128 / LMG 27833 / NCIMB 13906 / BL2).